The sequence spans 372 residues: MDVESKISLILRYPTEEVITVEELRELLQLGHQLNHYIGFEISGFIHIGTGIVSMSKVVDLQRAGVRTQILLADIHSWLNNKLGGDLDTIRKVAVTYYIEAFKKVIETLGGDPDATRFVLGSDLYHHNDEYWLLLMDITRHLTLSQVRHSLTILGRKMGESIPLAYLVYPPLQVADVFALGAHIPHGGVDQRRAHILARQVADKIRFYPLEVGGKRVKPVALHHKLLPALNISTKPSNKEELSEMKMSKSVPQSAIFIHDSPEEIRQKISKAYCPPRETEYNPVLELLHISAFREERKTPFIIKRPPQYGGDIEVWTYEEVERLYREGKIHPADLKNATAEALINILEPIYKYFQGPGAKLLQEMKNITITR.

Y37, Y169, Q173, D176, and Q191 together coordinate L-tyrosine. The 'KMSKS' region motif lies at 246 to 250; it reads KMSKS. ATP is bound at residue K249.

This sequence belongs to the class-I aminoacyl-tRNA synthetase family. TyrS type 4 subfamily. Homodimer.

The protein resides in the cytoplasm. It catalyses the reaction tRNA(Tyr) + L-tyrosine + ATP = L-tyrosyl-tRNA(Tyr) + AMP + diphosphate + H(+). Its function is as follows. Catalyzes the attachment of tyrosine to tRNA(Tyr) in a two-step reaction: tyrosine is first activated by ATP to form Tyr-AMP and then transferred to the acceptor end of tRNA(Tyr). The sequence is that of Tyrosine--tRNA ligase 1 from Pyrobaculum aerophilum (strain ATCC 51768 / DSM 7523 / JCM 9630 / CIP 104966 / NBRC 100827 / IM2).